We begin with the raw amino-acid sequence, 85 residues long: U4-theraphotoxin-Hhn1a (85 aa).

Positions 1–22 are cleaved as a signal peptide; it reads MKVTLIAILTCAAVLVLHTTAA. Residues 23–48 constitute a propeptide that is removed on maturation; the sequence is EELEAESQLMKVGMPDTELAAVDEER. 3 disulfides stabilise this stretch: C52–C66, C56–C77, and C71–C82.

Belongs to the neurotoxin 12 (Hwtx-2) family. 02 (Hwtx-2) subfamily. In terms of assembly, monomer. In terms of tissue distribution, expressed by the venom gland.

It is found in the secreted. In terms of biological role, neurotoxin active on both insects and mammals. The chain is U4-theraphotoxin-Hhn1a from Cyriopagopus hainanus (Chinese bird spider).